Here is a 375-residue protein sequence, read N- to C-terminus: UDP-N-acetylglucosamine--N-acetylmuramyl-(pentapeptide) pyrophosphoryl-undecaprenol N-acetylglucosamine transferase (375 aa).

Residues 15-17 (TGG), Asn126, Arg169, Ser197, and Gln298 each bind UDP-N-acetyl-alpha-D-glucosamine.

It belongs to the glycosyltransferase 28 family. MurG subfamily.

The protein resides in the cell inner membrane. It carries out the reaction di-trans,octa-cis-undecaprenyl diphospho-N-acetyl-alpha-D-muramoyl-L-alanyl-D-glutamyl-meso-2,6-diaminopimeloyl-D-alanyl-D-alanine + UDP-N-acetyl-alpha-D-glucosamine = di-trans,octa-cis-undecaprenyl diphospho-[N-acetyl-alpha-D-glucosaminyl-(1-&gt;4)]-N-acetyl-alpha-D-muramoyl-L-alanyl-D-glutamyl-meso-2,6-diaminopimeloyl-D-alanyl-D-alanine + UDP + H(+). It functions in the pathway cell wall biogenesis; peptidoglycan biosynthesis. Functionally, cell wall formation. Catalyzes the transfer of a GlcNAc subunit on undecaprenyl-pyrophosphoryl-MurNAc-pentapeptide (lipid intermediate I) to form undecaprenyl-pyrophosphoryl-MurNAc-(pentapeptide)GlcNAc (lipid intermediate II). This Rhodopseudomonas palustris (strain BisB18) protein is UDP-N-acetylglucosamine--N-acetylmuramyl-(pentapeptide) pyrophosphoryl-undecaprenol N-acetylglucosamine transferase.